The chain runs to 660 residues: Probable alpha-galactosidase D (660 aa).

Residues 1–20 form the signal peptide; the sequence is MLLHFILYAALSSVVTSVSL. 3 N-linked (GlcNAc...) asparagine glycosylation sites follow: asparagine 47, asparagine 91, and asparagine 129. An intrachain disulfide couples cysteine 124 to cysteine 157. Aspartate 155 serves as the catalytic Nucleophile. N-linked (GlcNAc...) asparagine glycans are attached at residues asparagine 182 and asparagine 191. 200-204 lines the substrate pocket; sequence EWGIS. Catalysis depends on aspartate 222, which acts as the Proton donor. Asparagine 351, asparagine 403, asparagine 460, asparagine 492, asparagine 506, asparagine 514, and asparagine 584 each carry an N-linked (GlcNAc...) asparagine glycan.

It belongs to the glycosyl hydrolase 27 family.

The protein resides in the secreted. The enzyme catalyses Hydrolysis of terminal, non-reducing alpha-D-galactose residues in alpha-D-galactosides, including galactose oligosaccharides, galactomannans and galactolipids.. In terms of biological role, hydrolyzes a variety of simple alpha-D-galactoside as well as more complex molecules such as oligosaccharides and polysaccharides. This is Probable alpha-galactosidase D (aglD) from Aspergillus niger (strain ATCC MYA-4892 / CBS 513.88 / FGSC A1513).